Consider the following 352-residue polypeptide: Biotin synthase (352 aa).

The region spanning 44–262 is the Radical SAM core domain; that stretch reads NRVQVSTLLS…LAVARIMMPK (219 aa). [4Fe-4S] cluster-binding residues include Cys59, Cys63, and Cys66. [2Fe-2S] cluster-binding residues include Cys103, Cys134, Cys194, and Arg266.

This sequence belongs to the radical SAM superfamily. Biotin synthase family. In terms of assembly, homodimer. The cofactor is [4Fe-4S] cluster. [2Fe-2S] cluster is required as a cofactor.

It carries out the reaction (4R,5S)-dethiobiotin + (sulfur carrier)-SH + 2 reduced [2Fe-2S]-[ferredoxin] + 2 S-adenosyl-L-methionine = (sulfur carrier)-H + biotin + 2 5'-deoxyadenosine + 2 L-methionine + 2 oxidized [2Fe-2S]-[ferredoxin]. It participates in cofactor biosynthesis; biotin biosynthesis; biotin from 7,8-diaminononanoate: step 2/2. Functionally, catalyzes the conversion of dethiobiotin (DTB) to biotin by the insertion of a sulfur atom into dethiobiotin via a radical-based mechanism. The sequence is that of Biotin synthase from Ectopseudomonas mendocina (strain ymp) (Pseudomonas mendocina).